We begin with the raw amino-acid sequence, 528 residues long: T-complex protein 1 subunit gamma (528 aa).

Serine 250 is modified (phosphoserine). Cysteine 364 and cysteine 370 are disulfide-bonded.

The protein belongs to the TCP-1 chaperonin family. Heterooligomeric complex of about 850 to 900 kDa that forms two stacked rings, 12 to 16 nm in diameter.

The protein localises to the cytoplasm. Molecular chaperone; assists the folding of proteins upon ATP hydrolysis. Known to play a role, in vitro, in the folding of actin and tubulin. This is T-complex protein 1 subunit gamma (cct3) from Schizosaccharomyces pombe (strain 972 / ATCC 24843) (Fission yeast).